The sequence spans 278 residues: tRNA pseudouridine synthase A (278 aa).

D52 (nucleophile) is an active-site residue. Y110 is a substrate binding site. Residues 259–278 (SKRQNGTTKVEQPSSYVHEE) are disordered. Residues 261–278 (RQNGTTKVEQPSSYVHEE) are compositionally biased toward polar residues.

The protein belongs to the tRNA pseudouridine synthase TruA family. As to quaternary structure, homodimer.

The enzyme catalyses uridine(38/39/40) in tRNA = pseudouridine(38/39/40) in tRNA. Its function is as follows. Formation of pseudouridine at positions 38, 39 and 40 in the anticodon stem and loop of transfer RNAs. In Chloroflexus aurantiacus (strain ATCC 29366 / DSM 635 / J-10-fl), this protein is tRNA pseudouridine synthase A.